Here is a 120-residue protein sequence, read N- to C-terminus: Large ribosomal subunit protein bL17 (120 aa).

Belongs to the bacterial ribosomal protein bL17 family. In terms of assembly, part of the 50S ribosomal subunit. Contacts protein L32.

The chain is Large ribosomal subunit protein bL17 from Mycoplasmopsis synoviae (strain 53) (Mycoplasma synoviae).